We begin with the raw amino-acid sequence, 431 residues long: Glutamyl-tRNA reductase (431 aa).

Substrate-binding positions include 49–52, Ser109, 114–116, and Gln120; these read TCNR and EGQ. The active-site Nucleophile is Cys50. 189-194 provides a ligand contact to NADP(+); the sequence is GAGKMS.

It belongs to the glutamyl-tRNA reductase family. Homodimer.

The catalysed reaction is (S)-4-amino-5-oxopentanoate + tRNA(Glu) + NADP(+) = L-glutamyl-tRNA(Glu) + NADPH + H(+). It participates in porphyrin-containing compound metabolism; protoporphyrin-IX biosynthesis; 5-aminolevulinate from L-glutamyl-tRNA(Glu): step 1/2. The protein operates within porphyrin-containing compound metabolism; chlorophyll biosynthesis. Its function is as follows. Catalyzes the NADPH-dependent reduction of glutamyl-tRNA(Glu) to glutamate 1-semialdehyde (GSA). In Trichodesmium erythraeum (strain IMS101), this protein is Glutamyl-tRNA reductase.